A 496-amino-acid polypeptide reads, in one-letter code: Nucleolar and spindle-associated protein 1-B (496 aa).

3 disordered regions span residues 44 to 206 (YPES…HEAH), 250 to 294 (TPVS…STAN), and 338 to 496 (KSSS…VPVK). Over residues 56 to 69 (GCTSLTDTDELNSS) the composition is skewed to polar residues. A compositionally biased stretch (basic and acidic residues) spans 121 to 134 (TQDKDCLESKKKEV). The segment covering 150–159 (QDTSKQNNSE) has biased composition (polar residues). A compositionally biased stretch (low complexity) spans 261–281 (SRLSLLSPLPRTTGASPSRTP). Composition is skewed to polar residues over residues 376-396 (NTTIQPSPAITESPCQQNKAN) and 403-423 (AQNTETPNTNKKGSFDLQASL). Low complexity predominate over residues 447–459 (SGSNSNVSVLKNN). The span at 467–485 (TREERRKQHELDRKGKRDQ) shows a compositional bias: basic and acidic residues.

This sequence belongs to the NUSAP family. Interacts with DNA, microtubules, ipo7, kpna2 and kpnb1. Microtubule stabilization is inhibited by ipo7 and kpna2, while microtubule bundling is inhibited by kpnb1. Active GTP-bound ran causes dissociation of ipo7 and kpnb1.

It is found in the cytoplasm. The protein resides in the nucleus. It localises to the cytoskeleton. Its subcellular location is the spindle. Functionally, microtubule-associated protein with the capacity to bundle and stabilize microtubules. May associate with chromosomes and promote the organization of meiotic or mitotic spindle microtubules around them. In Xenopus laevis (African clawed frog), this protein is Nucleolar and spindle-associated protein 1-B (nusap1-b).